Here is a 319-residue protein sequence, read N- to C-terminus: tRNA uridine(34) hydroxylase (319 aa).

Residues 124 to 218 enclose the Rhodanese domain; the sequence is LDEDTVILDA…YGKNEETKGE (95 aa). Cys178 serves as the catalytic Cysteine persulfide intermediate.

It belongs to the TrhO family.

The catalysed reaction is uridine(34) in tRNA + AH2 + O2 = 5-hydroxyuridine(34) in tRNA + A + H2O. Functionally, catalyzes oxygen-dependent 5-hydroxyuridine (ho5U) modification at position 34 in tRNAs. In Listeria monocytogenes serovar 1/2a (strain ATCC BAA-679 / EGD-e), this protein is tRNA uridine(34) hydroxylase.